A 102-amino-acid polypeptide reads, in one-letter code: Protein 108 (102 aa).

The N-terminal stretch at 1–30 is a signal peptide; the sequence is MASVKSSSSSSSSSFISLLLLILLVIVLQS. Cystine bridges form between Cys-41–Cys-77, Cys-51–Cys-66, Cys-67–Cys-92, and Cys-79–Cys-99.

It belongs to the A9/FIL1 family. As to expression, stamen- and tapetum-specific.

The protein resides in the secreted. The sequence is that of Protein 108 from Solanum lycopersicum (Tomato).